A 481-amino-acid chain; its full sequence is 3-isopropylmalate dehydratase large subunit (481 aa).

3 residues coordinate [4Fe-4S] cluster: cysteine 363, cysteine 423, and cysteine 426. A disordered region spans residues 434-465 (LRPGQRAASTSNRNFEGRQGRGGRTHLVSPPV).

This sequence belongs to the aconitase/IPM isomerase family. LeuC type 1 subfamily. Heterodimer of LeuC and LeuD. The cofactor is [4Fe-4S] cluster.

It catalyses the reaction (2R,3S)-3-isopropylmalate = (2S)-2-isopropylmalate. The protein operates within amino-acid biosynthesis; L-leucine biosynthesis; L-leucine from 3-methyl-2-oxobutanoate: step 2/4. In terms of biological role, catalyzes the isomerization between 2-isopropylmalate and 3-isopropylmalate, via the formation of 2-isopropylmaleate. The protein is 3-isopropylmalate dehydratase large subunit of Salinispora tropica (strain ATCC BAA-916 / DSM 44818 / JCM 13857 / NBRC 105044 / CNB-440).